The sequence spans 296 residues: ATP synthase gamma chain (296 aa).

It belongs to the ATPase gamma chain family. As to quaternary structure, F-type ATPases have 2 components, CF(1) - the catalytic core - and CF(0) - the membrane proton channel. CF(1) has five subunits: alpha(3), beta(3), gamma(1), delta(1), epsilon(1). CF(0) has three main subunits: a, b and c.

It localises to the cell membrane. Produces ATP from ADP in the presence of a proton gradient across the membrane. The gamma chain is believed to be important in regulating ATPase activity and the flow of protons through the CF(0) complex. In Pseudarthrobacter chlorophenolicus (strain ATCC 700700 / DSM 12829 / CIP 107037 / JCM 12360 / KCTC 9906 / NCIMB 13794 / A6) (Arthrobacter chlorophenolicus), this protein is ATP synthase gamma chain.